The following is a 122-amino-acid chain: MIQMTSVLDVADNSGAKKVFCIKVLGGSKRKYASIGDVIVVSVREALPNSKVKKGDVAKAVIVRTKREVGRPDGSYIKFDGNSAVLINKDMEPIGTRIFGPVARELRARKFMKIISLAPEVL.

Belongs to the universal ribosomal protein uL14 family. As to quaternary structure, part of the 50S ribosomal subunit. Forms a cluster with proteins L3 and L19. In the 70S ribosome, L14 and L19 interact and together make contacts with the 16S rRNA in bridges B5 and B8.

Functionally, binds to 23S rRNA. Forms part of two intersubunit bridges in the 70S ribosome. In Myxococcus xanthus (strain DK1622), this protein is Large ribosomal subunit protein uL14.